Reading from the N-terminus, the 379-residue chain is Homoserine O-succinyltransferase (379 aa).

The 310-residue stretch at 48 to 357 (NAVLICHALS…SAHGHDAFLM (310 aa)) folds into the AB hydrolase-1 domain. Ser-154 serves as the catalytic Nucleophile. Arg-224 provides a ligand contact to substrate. Catalysis depends on residues Asp-319 and His-352. Asp-353 provides a ligand contact to substrate.

The protein belongs to the AB hydrolase superfamily. MetX family. Homodimer.

It localises to the cytoplasm. The enzyme catalyses L-homoserine + succinyl-CoA = O-succinyl-L-homoserine + CoA. It participates in amino-acid biosynthesis; L-methionine biosynthesis via de novo pathway; O-succinyl-L-homoserine from L-homoserine: step 1/1. Activity increases in the presence of MetW. In terms of biological role, transfers a succinyl group from succinyl-CoA to L-homoserine, forming succinyl-L-homoserine. This chain is Homoserine O-succinyltransferase, found in Neisseria gonorrhoeae.